A 292-amino-acid polypeptide reads, in one-letter code: MNREDVEFPTCDGLILRGWLYPGTIRGPAIVMNQGFNTPKEILLPDVAVWFQQQGVTVLLYDNRCIGASDGEPRNDVKPAKLVEDFHDALTFMARHPMVDEDKIILYGYSFSAMTALVAAGLDHRVGAAISVTPIANYDFREKEKNNVMALAMQDRVSTLAGNDPVYIPFVGDDGYNPAGWGNQYNMEQFRAFLGTSFFTNRTTVQSYYHVLAWQPYGAMRLIKGTPVMMVTPAEDTISSPADQRAVFDMIPEPNKEFDLVAGRGHMDVINGEGAEEVLQRQLAFMRKHLDF.

The interval 46 to 267 (DVAVWFQQQG…FDLVAGRGHM (222 aa)) is abhydrolase domain.

Belongs to the polyketide transferase af380 family.

The catalysed reaction is fumagillol + dodecapentaneoyl-[polyketide synthase] = prefumagillin + holo-[polyketide synthase]. It functions in the pathway secondary metabolite biosynthesis; terpenoid biosynthesis. In terms of biological role, polyketide transferase; part of the gene cluster that mediates the biosynthesis of fumagillin, a meroterpenoid that has numerous biological activities including irreversible inhibition of human type 2 methionine aminopeptidase (METAP2). Within the pathway, the polyketide transferase af380 catalyzes the transfer of a dodecapentaenoyl group synthesized by the polyketide synthase af370 onto 5R-hydroxy-seco-sesquiterpene to produce prefumagillin. The pathway begins with the conversion of farnesyl pyrophosphate (FPP) to beta-trans-bergamotene by the membrane-bound beta-trans-bergamotene synthase af520. The multifunctional cytochrome P450 monooxygenase af510 then converts beta-trans-bergamotene into 5-keto-demethoxyfumagillol via several oxydation steps. 5-keto-demethoxyfumagillol is then subjected to successive C-6 hydroxylation and O-methylation by the dioxygenase af480 and O-methyltransferase af390-400, respectively, to yield 5-keto-fumagillol, which is then stereoselectively reduced by the keto-reductase af490 to 5R-hydroxy-seco-sesquiterpene. The next step is the polyketide transferase af380-catalyzed transfer of a dodecapentaenoyl group synthesized by the polyketide synthase af370 onto 5R-hydroxy-seco-sesquiterpene which leads to the production of prefumagillin. Finally, oxidative cleavage by the monooxygenase af470 converts prefumagillin to fumagillin. This is Polyketide transferase af380 from Aspergillus fumigatus (strain ATCC MYA-4609 / CBS 101355 / FGSC A1100 / Af293) (Neosartorya fumigata).